The following is a 547-amino-acid chain: Glucose-6-phosphate isomerase (547 aa).

Glu-351 acts as the Proton donor in catalysis. Residues His-382 and Lys-509 contribute to the active site.

This sequence belongs to the GPI family.

It is found in the cytoplasm. It catalyses the reaction alpha-D-glucose 6-phosphate = beta-D-fructose 6-phosphate. The protein operates within carbohydrate biosynthesis; gluconeogenesis. It participates in carbohydrate degradation; glycolysis; D-glyceraldehyde 3-phosphate and glycerone phosphate from D-glucose: step 2/4. Its function is as follows. Catalyzes the reversible isomerization of glucose-6-phosphate to fructose-6-phosphate. This Coxiella burnetii (strain RSA 493 / Nine Mile phase I) protein is Glucose-6-phosphate isomerase.